Reading from the N-terminus, the 140-residue chain is Lipoprotein MlpD (140 aa).

Residues 1–17 (MKIINILFCLFLLMLNG) form the signal peptide. Cys-18 carries the N-palmitoyl cysteine lipid modification. Cys-18 is lipidated: S-diacylglycerol cysteine. Residues 22–53 (DTNNSQTKSRQKRDLTQKEATQEKPKSKEELL) form a disordered region. Positions 33–53 (KRDLTQKEATQEKPKSKEELL) are enriched in basic and acidic residues.

This sequence belongs to the Multicopy lipoprotein (Mlp) family.

Its subcellular location is the cell outer membrane. Its function is as follows. An outer membrane protein that may participate in pathogenesis. Some human Lyme disease patients have antibodies against this protein. The Mlp proteins probably undergo intragenic recombination, generating new alleles. The polypeptide is Lipoprotein MlpD (Borreliella burgdorferi (strain ATCC 35210 / DSM 4680 / CIP 102532 / B31) (Borrelia burgdorferi)).